Reading from the N-terminus, the 872-residue chain is Valine--tRNA ligase (872 aa).

The 'HIGH' region signature appears at Pro-45–Asn-55. The short motif at Lys-524–Ser-528 is the 'KMSKS' region element. Position 527 (Lys-527) interacts with ATP.

Belongs to the class-I aminoacyl-tRNA synthetase family. ValS type 2 subfamily.

It localises to the cytoplasm. The catalysed reaction is tRNA(Val) + L-valine + ATP = L-valyl-tRNA(Val) + AMP + diphosphate. Its function is as follows. Catalyzes the attachment of valine to tRNA(Val). As ValRS can inadvertently accommodate and process structurally similar amino acids such as threonine, to avoid such errors, it has a 'posttransfer' editing activity that hydrolyzes mischarged Thr-tRNA(Val) in a tRNA-dependent manner. The sequence is that of Valine--tRNA ligase from Natronomonas pharaonis (strain ATCC 35678 / DSM 2160 / CIP 103997 / JCM 8858 / NBRC 14720 / NCIMB 2260 / Gabara) (Halobacterium pharaonis).